A 95-amino-acid chain; its full sequence is uncharacterized protein (95 aa).

The tract at residues 1–64 (MEIDDIFASK…PKGASGRKRT (64 aa)) is disordered. Basic and acidic residues predominate over residues 18–28 (KSNDSKSEAKA). A compositionally biased stretch (polar residues) spans 35 to 49 (TKSTPSRPKPTNNQD).

This is an uncharacterized protein from Schizosaccharomyces pombe (strain 972 / ATCC 24843) (Fission yeast).